Reading from the N-terminus, the 383-residue chain is Agmatine deiminase (383 aa).

2 residues coordinate agmatine: Asp220 and Asp226. The active-site Amidino-cysteine intermediate is Cys366.

Belongs to the agmatine deiminase family. As to quaternary structure, forms homodimers.

It carries out the reaction agmatine + H2O = N-carbamoylputrescine + NH4(+). The protein operates within amine and polyamine biosynthesis; putrescine biosynthesis via agmatine pathway; N-carbamoylputrescine from agmatine: step 1/1. Inhibited by N-ethylmaleimide and iodoacetamide. Functionally, mediates the hydrolysis of agmatine into N-carbamoylputrescine in the arginine decarboxylase (ADC) pathway of putrescine biosynthesis, a basic polyamine. This chain is Agmatine deiminase (AIH), found in Arabidopsis thaliana (Mouse-ear cress).